We begin with the raw amino-acid sequence, 432 residues long: Phosphomethylpyrimidine synthase (432 aa).

Substrate is bound by residues N66, M95, Y124, H163, 185–187 (SRG), 226–229 (DGLR), and E265. Residue H269 participates in Zn(2+) binding. Residue Y292 participates in substrate binding. H333 lines the Zn(2+) pocket. C409, C412, and C416 together coordinate [4Fe-4S] cluster.

The protein belongs to the ThiC family. [4Fe-4S] cluster is required as a cofactor.

The catalysed reaction is 5-amino-1-(5-phospho-beta-D-ribosyl)imidazole + S-adenosyl-L-methionine = 4-amino-2-methyl-5-(phosphooxymethyl)pyrimidine + CO + 5'-deoxyadenosine + formate + L-methionine + 3 H(+). It participates in cofactor biosynthesis; thiamine diphosphate biosynthesis. In terms of biological role, catalyzes the synthesis of the hydroxymethylpyrimidine phosphate (HMP-P) moiety of thiamine from aminoimidazole ribotide (AIR) in a radical S-adenosyl-L-methionine (SAM)-dependent reaction. In Thermoanaerobacter sp. (strain X514), this protein is Phosphomethylpyrimidine synthase.